Reading from the N-terminus, the 349-residue chain is N-formyl peptide receptor 3 (349 aa).

At 1-27 (METNFSIPLNESEEVLPEPAGHTVLWI) the chain is on the extracellular side. N-linked (GlcNAc...) asparagine glycosylation is found at asparagine 4 and asparagine 10. A helical membrane pass occupies residues 28-50 (FSLLVHGVTFIFGVLGNGLVIWV). Over 51 to 61 (AGFRMTRTVNT) the chain is Cytoplasmic. Residues 62–83 (ICYLNLALADFSFSAILPFRMV) form a helical membrane-spanning segment. At 84-100 (SVAMREKWPFGTFLCKL) the chain is on the extracellular side. An intrachain disulfide couples cysteine 98 to cysteine 176. Residues 101-121 (VHVMIDINLFVSVYLITIIAL) form a helical membrane-spanning segment. At 122–140 (DRCICVLHPAWAQNHRTMS) the chain is on the cytoplasmic side. A helical transmembrane segment spans residues 141–162 (LAKRVMMGLWILAIVLTLPNFI). The Extracellular portion of the chain corresponds to 163-205 (FWTTISTKNGDTYCIFNFPFWGDTAVERLNAFITMGKVFLILH). A helical membrane pass occupies residues 206 to 226 (FIIGFSMPMSIITVCYGIIAA). Topologically, residues 227–242 (KIHRNHMIKSSSPLRV) are cytoplasmic. The chain crosses the membrane as a helical span at residues 243-266 (FAAVVASFFICWFPYELIGILMAV). The Extracellular segment spans residues 267 to 286 (WLKEMLLNGKYKIILVLLNP). The helical transmembrane segment at 287–306 (TSSLAFFNSCLNPILYVFLG) threads the bilayer. Residues 307-349 (SNFQERLIRSLPTSLERALTEVPDSAQTSNTHTNSASPPEETE) lie on the Cytoplasmic side of the membrane. The segment at 328-349 (VPDSAQTSNTHTNSASPPEETE) is disordered. Polar residues predominate over residues 331–343 (SAQTSNTHTNSAS).

It belongs to the G-protein coupled receptor 1 family.

The protein localises to the cell membrane. In terms of biological role, low affinity receptor for N-formyl-methionyl peptides, which are powerful neutrophils chemotactic factors. Binding of FMLP to the receptor causes activation of neutrophils. This response is mediated via a G-protein that activates a phosphatidylinositol-calcium second messenger system. The polypeptide is N-formyl peptide receptor 3 (FPR3) (Pongo pygmaeus (Bornean orangutan)).